A 241-amino-acid chain; its full sequence is LexA repressor (241 aa).

Residues 41–61 (FREIGNAAGLKSPSSVKHQLQ) constitute a DNA-binding region (H-T-H motif). Residues Ser-165 and Lys-202 each act as for autocatalytic cleavage activity in the active site.

It belongs to the peptidase S24 family. Homodimer.

It carries out the reaction Hydrolysis of Ala-|-Gly bond in repressor LexA.. Its function is as follows. Represses a number of genes involved in the response to DNA damage (SOS response), including recA and lexA. In the presence of single-stranded DNA, RecA interacts with LexA causing an autocatalytic cleavage which disrupts the DNA-binding part of LexA, leading to derepression of the SOS regulon and eventually DNA repair. This Bifidobacterium longum (strain DJO10A) protein is LexA repressor.